We begin with the raw amino-acid sequence, 291 residues long: Alpha/beta-gliadin A-II (291 aa).

The first 20 residues, 1–20 (MKTFPILALLAIVATTATTA), serve as a signal peptide directing secretion. A compositionally biased stretch (low complexity) spans 32-55 (NPSQQQPQEQVPLVQEQQFQGQQQ). 2 disordered regions span residues 32 to 120 (NPSQ…QQQQ) and 227 to 250 (QQYPSGQGFFQPSQQNPQAQGSFQ). Composition is skewed to pro residues over residues 56 to 71 (PFPPQQPYPQPQPFPS) and 81 to 104 (FPQPQLPYPQPQPFRPQQPYPQPQ). 2 stretches are compositionally biased toward low complexity: residues 105–120 (PQYSQPQQPISQQQQQ) and 227–237 (QQYPSGQGFFQ). Polar residues predominate over residues 238 to 250 (PSQQNPQAQGSFQ).

The protein belongs to the gliadin/glutenin family. Substrate of transglutaminase.

In terms of biological role, gliadin is the major seed storage protein in wheat. This is Alpha/beta-gliadin A-II from Triticum aestivum (Wheat).